The following is a 493-amino-acid chain: 2-amino-4-deoxychorismate synthase (493 aa).

It belongs to the anthranilate synthase component I family. Mg(2+) is required as a cofactor.

It carries out the reaction (2S)-2-amino-4-deoxychorismate + L-glutamate = chorismate + L-glutamine. In terms of biological role, converts chorismate to 2-amino-4-deoxychorismate (ADIC). Involved in the biosynthesis of the benzoxazolinate moiety of the enediyne antitumor antibiotic C-1027. The polypeptide is 2-amino-4-deoxychorismate synthase (sgcD) (Streptomyces globisporus).